The chain runs to 124 residues: RNA polymerase-binding protein RbpA (124 aa).

Positions 34, 38, 56, and 59 each coordinate Zn(2+). The sufficient for interaction with HrdB (SigA) stretch occupies residues 73–124; it reads EKKAKPARTHWDMLMERRTREELEEVLEERLAVLRSGAMNIAVHPRDSRKSA.

The protein belongs to the RNA polymerase-binding protein RbpA family. As to quaternary structure, homodimer. Forms a complex with the RNAP, and a complex with RNAP plus principal sigma factor HrdB associated with promoter. Binds to free principal sigma factors HrdB and HrdA, probably via the sigma-2 domain, but not to 6 other sigma factors tested. It depends on Zn(2+) as a cofactor.

Binds to RNA polymerase (RNAP), stimulating transcription from principal, but not alternative sigma factor promoters. Stimulates transcription from several principal sigma factor HrdB (SigA)-dependent promoters but not from a SigR-dependent promoter. Stimulation occurs in the presence of the transcription initiation inhibitor rifampicin (Rif). The protein is RNA polymerase-binding protein RbpA of Streptomyces coelicolor (strain ATCC BAA-471 / A3(2) / M145).